The sequence spans 371 residues: ADP-ribosylarginine hydrolase Tri1 (371 aa).

Positions M1–P61 are N-terminal extension. Positions G70–E362 are ADP-ribosyl hydrolase domain. Positions 112, 113, 114, 157, and 313 each coordinate Mg(2+).

The protein belongs to the ADP-ribosylglycohydrolase family. Mg(2+) serves as cofactor.

The enzyme catalyses N(omega)-(ADP-D-ribosyl)-L-arginyl-[protein] + H2O = ADP-D-ribose + L-arginyl-[protein]. Immunity component of an interbacterial competition system (also called effector-immunity systems). Expression in E.coli neutralizes the toxic effects of non-cognate S.proteamaculans effector protein Tre1 (Tre1-Sp); cannot be co-purified with Tre1-Sp from E.coli, suggesting they do not form a stable complex. Probably acts as an arginine mono-ADP-ribosylhydrolase, mediating the removal of mono-ADP-ribose attached to arginine residues on proteins. Probably de-ADP-ribosylates FtsZ and possibly other proteins; the ability to hydrolyze ADP-ribosyl moieties is not essential for neutralization of its cognate toxin, strongly suggesting its N-terminal extension occludes the active site of cognate toxin Tre1. In Pseudomonas putida (strain GB-1), this protein is ADP-ribosylarginine hydrolase Tri1.